The sequence spans 211 residues: Large ribosomal subunit protein uL3 (211 aa).

The segment at 134–155 (ATHGNSLSHRAPGSIGQNQTPG) is disordered. Residue Q152 is modified to N5-methylglutamine.

This sequence belongs to the universal ribosomal protein uL3 family. In terms of assembly, part of the 50S ribosomal subunit. Forms a cluster with proteins L14 and L19. In terms of processing, methylated by PrmB.

One of the primary rRNA binding proteins, it binds directly near the 3'-end of the 23S rRNA, where it nucleates assembly of the 50S subunit. The polypeptide is Large ribosomal subunit protein uL3 (Methylococcus capsulatus (strain ATCC 33009 / NCIMB 11132 / Bath)).